Consider the following 312-residue polypeptide: Retron Ec83 reverse transcriptase (312 aa).

The 226-residue stretch at 14 to 239 folds into the Reverse transcriptase domain; the sequence is PDFDVLLKSR…HNRHVTGVTL (226 aa). Mg(2+) is bound by residues Asp97, Asp185, and Asp186.

It belongs to the bacterial reverse transcriptase family.

The enzyme catalyses DNA(n) + a 2'-deoxyribonucleoside 5'-triphosphate = DNA(n+1) + diphosphate. In terms of biological role, reverse transcriptase (RT) component of antiviral defense system retron Ec83, composed of a non-coding RNA (ncRNA), this reverse transcriptase (RT), a probable ATPase and a putative HNH endonuclease. Expression of retron Ec83 confers protection against bacteriophages T2, T4 and T6. At multiplicity of infection (MOI) of 0.02 cultures slow growth when infected with T4 but do not collapse, at MOI 2 cultures enter growth stasis. Responsible for synthesis of msDNA-Ec83 (a linear ssDNA with a 5'-terminal phosphate residue). Unlike most known msDNAs the mature product from the original strain does not have an RNA component. When the ncRNA plus RT are expressed in strain K12 / JM109 only linear DNA is seen in stationary phase cells, but logarithmic phase cells have both a linear and branched msDNA (a branched molecule with RNA linked by a 2',5'-phosphodiester bond to ssDNA, a 'classic' retron). The branched msDNA is probably the precursor for the mature linear msDNA, the precursor is cleaved endonucleolytically by ExoVII (xseA-xseB) leaving the observed mature 5'-phosphate ssDNA terminus. The retron transcript serves as primer (from a conserved internal G residue) and template for the reaction, and codes for the RT. Overexpression of the ncRNA and RT, which leads to increased levels of msDNA, is mutagenic in vivo. This may be due to a mismatch in the msDNA stem which binds and sequesters MutS and/or MutL. This chain is Retron Ec83 reverse transcriptase, found in Escherichia coli.